A 93-amino-acid polypeptide reads, in one-letter code: U12-lycotoxin-Ls1b (93 aa).

An N-terminal signal peptide occupies residues Met-1–Ser-18. The propeptide occupies Glu-19 to Arg-38.

This sequence belongs to the neurotoxin 31 family. Contains 5 disulfide bonds. As to expression, expressed by the venom gland.

It is found in the secreted. In Lycosa singoriensis (Wolf spider), this protein is U12-lycotoxin-Ls1b.